The following is a 250-amino-acid chain: mRNA-decapping protein g5R (250 aa).

The Nudix hydrolase domain occupies 97 to 243; the sequence is QKFRKNWLLP…IIGPAFNFIK (147 aa). The Nudix box signature appears at 132 to 153; the sequence is GKPKEDESDLTCAIREFEEETG. Glu-138 contacts Mg(2+). Residue Glu-147 is the Nucleophile of the active site. 2 residues coordinate Mg(2+): Glu-151 and Asp-173.

This sequence belongs to the Nudix hydrolase family. DIPP subfamily. As to quaternary structure, interacts with host RPL23A. Requires Mg(2+) as cofactor. The cofactor is Mn(2+).

The protein localises to the host rough endoplasmic reticulum. It catalyses the reaction diphospho-myo-inositol polyphosphate + H2O = myo-inositol polyphosphate + phosphate.. In terms of biological role, decapping enzyme required for the removal of the 5'-end m7GpppN cap tethered to viral and host mRNAs to allow their decay in cells. May therefore accelerate viral and cellular mRNA turnover to eliminate competing host mRNAs and allow stage-specific synthesis of viral proteins. Acceleration of the turnover of cellular transcripts may even promote the shutoff of host protein synthesis. In addition to the mRNA cap, g5R also efficiently hydrolyzes diphosphoinositol polyphosphates. Down-regulation of the level of PP-InsP5 (diphosphoinositol pentakisphosphate) may play a role in viral manipulation of the cellular secretory pathway, a step necessary for the formation of virions. Binds viral and cellular poly(A) mRNAs, thereby decreasing both types of mRNAs. The sequence is that of mRNA-decapping protein g5R from African swine fever virus (isolate Tick/South Africa/Pretoriuskop Pr4/1996) (ASFV).